A 260-amino-acid chain; its full sequence is MTSLKLLKEKAPLVICITNDVVKNFTANGLVALGASPAMSEFPADLEDLLKYAGGLLINIGTLTDENWKLYQAALKIAEKYNVPAVLDPVACGAGEYRKKVADDLINNYKLAAIRGNAGEIASLVGIDVASKGVDSAGVDNIDEIALAANEKFNIPIVVTGEVDAIAVNGEVVTIHNGSAMMPKVIGTGCLLGAVVASFIGLEKGQELKSLETAMLVYNIAGEIAEKHPNGHLPGTFKVEFINALYEITDEDVKEFKRVK.

Met39 is a substrate binding site. 2 residues coordinate ATP: Arg115 and Thr160. Residue Gly187 coordinates substrate.

The protein belongs to the Thz kinase family. Mg(2+) serves as cofactor.

The catalysed reaction is 5-(2-hydroxyethyl)-4-methylthiazole + ATP = 4-methyl-5-(2-phosphooxyethyl)-thiazole + ADP + H(+). Its pathway is cofactor biosynthesis; thiamine diphosphate biosynthesis; 4-methyl-5-(2-phosphoethyl)-thiazole from 5-(2-hydroxyethyl)-4-methylthiazole: step 1/1. Its function is as follows. Catalyzes the phosphorylation of the hydroxyl group of 4-methyl-5-beta-hydroxyethylthiazole (THZ). The chain is Hydroxyethylthiazole kinase 1 from Streptococcus pneumoniae (strain Hungary19A-6).